A 333-amino-acid polypeptide reads, in one-letter code: Probable G-protein coupled receptor 174 (333 aa).

Residues 1–27 are Extracellular-facing; it reads MPANYTCTRPDGDNTDFRYFIYAVTYT. Asn4 is a glycosylation site (N-linked (GlcNAc...) asparagine). Residues 28 to 48 form a helical membrane-spanning segment; it reads VILVPGLIGNILALWVFYGYM. The Cytoplasmic segment spans residues 49–53; that stretch reads KETKR. A helical membrane pass occupies residues 54 to 74; it reads AVIFMINLAIADLLQVLSLPL. Topologically, residues 75 to 91 are extracellular; it reads RIFYYLNHDWPFGPGLC. Cys91 and Cys168 are disulfide-bonded. A helical membrane pass occupies residues 92–112; sequence MFCFYLKYVNMYASIYFLVCI. The Cytoplasmic segment spans residues 113–134; that stretch reads SVRRFWFLMYPFRFHDCKQKYD. The helical transmembrane segment at 135–155 threads the bilayer; sequence LYISIAGWLIICLACVLFPLL. Residues 156–182 are Extracellular-facing; sequence RTSDDTSGNRTKCFVDLPTRNVNLAQS. N-linked (GlcNAc...) asparagine glycosylation occurs at Asn164. The helical transmembrane segment at 183-203 threads the bilayer; the sequence is VVMMTIGELIGFVTPLLIVLY. Residues 204 to 231 are Cytoplasmic-facing; it reads CTWKTVLSLQDKYPMAQDLGEKQKALKM. A helical membrane pass occupies residues 232–252; the sequence is ILTCAGVFLICFAPYHFSFPL. The Extracellular segment spans residues 253-269; that stretch reads DFLVKSNEIKSCLARRV. A helical membrane pass occupies residues 270 to 290; it reads ILIFHSVALCLASLNSCLDPV. At 291–333 the chain is on the cytoplasmic side; sequence IYYFSTNEFRRRLSRQDLHDSIQLHAKSFVSNHTASTMTPELC.

It belongs to the G-protein coupled receptor 1 family. Interacts with GNA13. Interacts with CCL21.

Its subcellular location is the cell membrane. Functionally, G-protein-coupled receptor of lysophosphatidylserine (LysoPS) that plays different roles in immune response. Plays a negative role in regulatory T-cell accumulation and homeostasis. Under inflammatory conditions where LysoPS production increases, contributes to the down-regulation of regulatory T-cell activity to favor effector response. Mediates the suppression of IL-2 production in activated T-lymphocytes leading to inhibition of growth, proliferation and differentiation of T-cells. Mechanistically, acts via G(s)-containing heterotrimeric G proteins to trigger elevated cyclic AMP levels and protein kinase A/PKA activity, which may in turn act to antagonize proximal TCR signaling. Plays an important role in the initial period of sepsis through the regulation of macrophage polarization and pro- and anti-inflammatory cytokine secretions. Upon testosterone treatment, acts as a receptor for CCL21 and subsequently triggers through G(q)-alpha and G(12)/G(13) proteins a calcium flux leading to chemotactic effects on activated B-cells. Signals via GNA13 and PKA to promote CD86 up-regulation by follicular B-cells. This Homo sapiens (Human) protein is Probable G-protein coupled receptor 174 (GPR174).